A 202-amino-acid chain; its full sequence is Small ribosomal subunit protein uS4c (202 aa).

In terms of domain architecture, S4 RNA-binding spans 90–153; that stretch reads MRLDNVTFRL…KSETIISKNI (64 aa).

It belongs to the universal ribosomal protein uS4 family. Part of the 30S ribosomal subunit. Contacts protein S5. The interaction surface between S4 and S5 is involved in control of translational fidelity.

The protein resides in the plastid. The protein localises to the chloroplast. Functionally, one of the primary rRNA binding proteins, it binds directly to 16S rRNA where it nucleates assembly of the body of the 30S subunit. In terms of biological role, with S5 and S12 plays an important role in translational accuracy. The chain is Small ribosomal subunit protein uS4c (rps4) from Hypnum cupressiforme (Cypress-leaved plait-moss).